The primary structure comprises 184 residues: MKPLVAFLVVLSIFGIQSQAEEIFNIFVPSKNGGNIQETVTIDNQQNTATINIHSGSCSSTTIFDYKHGYIASRVLSRRACYVIKMDHKAIPALDKLQRFLYEKQTMNAIDSPEYTWVRYNPLKSLITKVDWFLFGSPIRQLCKHMPLYEGEVATKPKEVSTGACAKVGLLGILGVSICGGIHL.

The N-terminal stretch at 1–20 is a signal peptide; sequence MKPLVAFLVVLSIFGIQSQA. A BRICHOS domain is found at 54–151; that stretch reads HSGSCSSTTI…LCKHMPLYEG (98 aa). C81 and C143 form a disulfide bridge.

Heterodimer with TFF1; disulfide linked. Interacts with TFF2. Stomach foveolar epithelium and duodenal Brunner's glands.

Its subcellular location is the secreted. The protein resides in the golgi apparatus. The chain is Gastrokine-2 (Gkn2) from Mus musculus (Mouse).